Reading from the N-terminus, the 266-residue chain is F-actin-capping protein subunit alpha (266 aa).

It belongs to the F-actin-capping protein alpha subunit family. Heterodimer of an alpha and a beta subunit.

Its subcellular location is the cytoplasm. The protein resides in the cytoskeleton. Its function is as follows. F-actin-capping proteins bind in a Ca(2+)-independent manner to the fast growing ends of actin filaments (barbed end) thereby blocking the exchange of subunits at these ends. Unlike other capping proteins (such as gelsolin and severin), these proteins do not sever actin filaments. The sequence is that of F-actin-capping protein subunit alpha (CAP1) from Debaryomyces hansenii (strain ATCC 36239 / CBS 767 / BCRC 21394 / JCM 1990 / NBRC 0083 / IGC 2968) (Yeast).